We begin with the raw amino-acid sequence, 198 residues long: Nucleoid occlusion factor SlmA (198 aa).

Residues 10-70 enclose the HTH tetR-type domain; that stretch reads NRREEILQSL…SLIEFIEDSL (61 aa). The segment at residues 33–52 is a DNA-binding region (H-T-H motif); the sequence is TTAKLAASVGVSEAALYRHF. Residues 117-145 adopt a coiled-coil conformation; that stretch reads EQDRLQGRINQLFERIEAQLRQVMREKKM.

Belongs to the nucleoid occlusion factor SlmA family. In terms of assembly, homodimer. Interacts with FtsZ.

It localises to the cytoplasm. The protein resides in the nucleoid. In terms of biological role, required for nucleoid occlusion (NO) phenomenon, which prevents Z-ring formation and cell division over the nucleoid. Acts as a DNA-associated cell division inhibitor that binds simultaneously chromosomal DNA and FtsZ, and disrupts the assembly of FtsZ polymers. SlmA-DNA-binding sequences (SBS) are dispersed on non-Ter regions of the chromosome, preventing FtsZ polymerization at these regions. This is Nucleoid occlusion factor SlmA from Klebsiella pneumoniae subsp. pneumoniae (strain ATCC 700721 / MGH 78578).